Reading from the N-terminus, the 968-residue chain is RNA polymerase-associated protein RapA (968 aa).

The Helicase ATP-binding domain occupies 164–334 (EVGQRHAPRV…FARLRLLDPD (171 aa)). 177-184 (DEVGLGKT) provides a ligand contact to ATP. A DEAH box motif is present at residues 280-283 (DEAH). The region spanning 490–644 (RVEWLLNYLV…TCPTGRTIYD (155 aa)) is the Helicase C-terminal domain.

This sequence belongs to the SNF2/RAD54 helicase family. RapA subfamily. In terms of assembly, interacts with the RNAP. Has a higher affinity for the core RNAP than for the holoenzyme. Its ATPase activity is stimulated by binding to RNAP.

Its function is as follows. Transcription regulator that activates transcription by stimulating RNA polymerase (RNAP) recycling in case of stress conditions such as supercoiled DNA or high salt concentrations. Probably acts by releasing the RNAP, when it is trapped or immobilized on tightly supercoiled DNA. Does not activate transcription on linear DNA. Probably not involved in DNA repair. This chain is RNA polymerase-associated protein RapA, found in Yersinia pseudotuberculosis serotype O:1b (strain IP 31758).